The chain runs to 914 residues: MALAKEIMGISLLEKSSSFMNSSSMALFNPNNYHKENHLWFNQQFQGRRNLSRRKAFRQSTMAAISENLIKVVPEKAVRFKVRAVVTVRNKNKEDLKETIVKHLDAFTDKIGRNVTLELISTDMDPNTKGPKKSNQAVLKDWSKKSNLKTERVNYTAEFIVDSNFGNPGAITVTNKHQQEFFLESITIEGFACGPVHFPCNSWVQPKKDHPGKRIFFSNQPYLPDETPAGLKSLRERELRDLRGDGKGVRKLSDRIYDYDIYNDLGNPDKGIDFARPKLGGDDNVPYPRRCRSGRVPTDTDISAESRVEKPNPTYVPRDEQFEESKMNTFSTSRLKAVLHNLIPSLMASISSNNHDFKGFSDIDNLYSKGLLLKLGLQDEVLKKLPLPKVVSSIKEGDLLKYDTPKILSKDKFAWLRDDEFARQAIAGVNPVSIEKLQFFPPVSKLDPEIYGPQESALKEEHILGHLNGMTVQEALDANKLFIVDHHDVYLPFLDRINALDGRKAYATRTIFFLSDVGTLKPIAIELSLPQTGPSSRSKRVVTPPVCATGNWTWQIAKAHVCANDAGVHQLVNHWLRTHASLEPFILAAHRQLSAMHPIYKLLDPHMRYTLEINGLARQSLINADGVIEACFTPGRYCMEISAAAYKNWRFDLEGLPADLIRRGMAVPDSTQPHGLKLLIEDYPYAADGLMIWGAIESWVRDYVNHYYPSSAQVCSDRELQAWYAETINVGHVDLRNEEWWPTLATPEDLISILTTLIWLASAQHAALNFGQYPYGGYVPNRPPLMRRLIPDENDPEYAVFLADPQKYFFSALPSLLQATKFMAVVDTLSTHSPDEEYLGERHQPSTWTGDAEIVEAFYKFSAEIGRIEKEIDERNANTKLKNRCGAGVLPYELLAPSSGPGVTCRGVPNSVSI.

Residues methionine 1–arginine 83 constitute a chloroplast transit peptide. Positions leucine 96 to serine 218 constitute a PLAT domain. Residues proline 221–isoleucine 914 form the Lipoxygenase domain. Histidine 574, histidine 579, histidine 765, asparagine 769, and isoleucine 914 together coordinate Fe cation.

Belongs to the lipoxygenase family. In terms of assembly, monomer. The cofactor is Fe cation. As to expression, expressed in roots and leaves. Detected in tubers and flower buds.

Its subcellular location is the plastid. The protein localises to the chloroplast stroma. The protein resides in the chloroplast thylakoid. The catalysed reaction is (9Z,12Z)-octadecadienoate + O2 = (13S)-hydroperoxy-(9Z,11E)-octadecadienoate. The enzyme catalyses (9Z,12Z,15Z)-octadecatrienoate + O2 = (13S)-hydroperoxy-(9Z,11E,15Z)-octadecatrienoate. It participates in lipid metabolism; oxylipin biosynthesis. Functionally, plant lipoxygenases may be involved in a number of diverse aspects of plant physiology including growth and development, pest resistance, and senescence or responses to wounding. Required for the regulation of wound-induced gene expression, but is not involved in the bulk production of jasmonate upon wounding. Catalyzes the hydroperoxidation of lipids containing a cis,cis-1,4-pentadiene structure. Linolenic acid is the preferred substrate, before linoleic and arachidonic acids. The polypeptide is Linoleate 13S-lipoxygenase 3-1, chloroplastic (LOX3.1) (Solanum tuberosum (Potato)).